Here is a 220-residue protein sequence, read N- to C-terminus: Demethylmenaquinone methyltransferase (220 aa).

S-adenosyl-L-methionine is bound by residues Thr47, Asp67, and 93–94; that span reads DA.

The protein belongs to the class I-like SAM-binding methyltransferase superfamily. MenG/UbiE family.

It catalyses the reaction a 2-demethylmenaquinol + S-adenosyl-L-methionine = a menaquinol + S-adenosyl-L-homocysteine + H(+). It functions in the pathway quinol/quinone metabolism; menaquinone biosynthesis; menaquinol from 1,4-dihydroxy-2-naphthoate: step 2/2. Its function is as follows. Methyltransferase required for the conversion of demethylmenaquinol (DMKH2) to menaquinol (MKH2). This Thermus thermophilus (strain ATCC BAA-163 / DSM 7039 / HB27) protein is Demethylmenaquinone methyltransferase.